The sequence spans 899 residues: UPF0182 protein Mhun_1303 (899 aa).

A run of 7 helical transmembrane segments spans residues 6-26, 39-59, 93-113, 136-156, 196-216, 240-260, and 271-291; these read LLIF…DLLS, VFLT…LLFF, VAAG…LAFL, LPFY…TLII, FLPQ…AFLW, ITIP…LLFL, and IAYG…AGFL.

Belongs to the UPF0182 family.

It localises to the cell membrane. This chain is UPF0182 protein Mhun_1303, found in Methanospirillum hungatei JF-1 (strain ATCC 27890 / DSM 864 / NBRC 100397 / JF-1).